A 449-amino-acid chain; its full sequence is Ribosomal protein uS12 methylthiotransferase RimO (449 aa).

The region spanning 16–126 (PKISFVSLGC…VMEAVHAAIA (111 aa)) is the MTTase N-terminal domain. Residues C25, C61, C90, C157, C161, and C164 each coordinate [4Fe-4S] cluster. Residues 143-381 (LTPRHYAYLK…MEHQQKISAR (239 aa)) enclose the Radical SAM core domain. The TRAM domain maps to 384–449 (REKIGKHVSV…DAYDLHGKAV (66 aa)).

Belongs to the methylthiotransferase family. RimO subfamily. [4Fe-4S] cluster is required as a cofactor.

Its subcellular location is the cytoplasm. It catalyses the reaction L-aspartate(89)-[ribosomal protein uS12]-hydrogen + (sulfur carrier)-SH + AH2 + 2 S-adenosyl-L-methionine = 3-methylsulfanyl-L-aspartate(89)-[ribosomal protein uS12]-hydrogen + (sulfur carrier)-H + 5'-deoxyadenosine + L-methionine + A + S-adenosyl-L-homocysteine + 2 H(+). Its function is as follows. Catalyzes the methylthiolation of an aspartic acid residue of ribosomal protein uS12. The polypeptide is Ribosomal protein uS12 methylthiotransferase RimO (Beijerinckia indica subsp. indica (strain ATCC 9039 / DSM 1715 / NCIMB 8712)).